The sequence spans 156 residues: ATP synthase subunit b (156 aa).

The helical transmembrane segment at 7-29 threads the bilayer; the sequence is LIGQSITFIFFVWFSMKFVWPPI.

Belongs to the ATPase B chain family. F-type ATPases have 2 components, F(1) - the catalytic core - and F(0) - the membrane proton channel. F(1) has five subunits: alpha(3), beta(3), gamma(1), delta(1), epsilon(1). F(0) has three main subunits: a(1), b(2) and c(10-14). The alpha and beta chains form an alternating ring which encloses part of the gamma chain. F(1) is attached to F(0) by a central stalk formed by the gamma and epsilon chains, while a peripheral stalk is formed by the delta and b chains.

Its subcellular location is the cell inner membrane. Its function is as follows. F(1)F(0) ATP synthase produces ATP from ADP in the presence of a proton or sodium gradient. F-type ATPases consist of two structural domains, F(1) containing the extramembraneous catalytic core and F(0) containing the membrane proton channel, linked together by a central stalk and a peripheral stalk. During catalysis, ATP synthesis in the catalytic domain of F(1) is coupled via a rotary mechanism of the central stalk subunits to proton translocation. In terms of biological role, component of the F(0) channel, it forms part of the peripheral stalk, linking F(1) to F(0). This chain is ATP synthase subunit b, found in Thiobacillus denitrificans (strain ATCC 25259 / T1).